A 255-amino-acid polypeptide reads, in one-letter code: Sporulation-specific N-acetylmuramoyl-L-alanine amidase (255 aa).

In terms of domain architecture, MurNAc-LAA spans 4-172 (IFIDPGHGGS…LARGHANGLE (169 aa)). The Zn(2+) site is built by His10, Glu24, and His79. The active site involves Glu141. In terms of domain architecture, SPOR spans 180-254 (TSSSGLYKVQ…AGFDAIVILE (75 aa)). 2 tandem repeats follow at residues 184 to 219 (GLYK…LLKD) and 220 to 255 (GLYK…ILES). A 2 X 35 AA approximate tandem repeats region spans residues 184-255 (GLYKVQIGAF…GFDAIVILES (72 aa)).

Belongs to the N-acetylmuramoyl-L-alanine amidase 3 family. Requires Zn(2+) as cofactor.

The protein localises to the secreted. Its subcellular location is the cell wall. The enzyme catalyses Hydrolyzes the link between N-acetylmuramoyl residues and L-amino acid residues in certain cell-wall glycopeptides.. Its activity is regulated as follows. Inhibited by EDTA. In terms of biological role, autolysins are involved in some important biological processes such as cell separation, cell-wall turnover, competence for genetic transformation, formation of the flagella - in particular of its basal body - and sporulation. CwlC is able to hydrolyze type A cell walls such as B.subtilis. Its main function is to lyze the mother cell wall peptidoglycan, playing a role during sporulation. The protein is Sporulation-specific N-acetylmuramoyl-L-alanine amidase (cwlC) of Bacillus subtilis (strain 168).